Consider the following 102-residue polypeptide: Small ribosomal subunit protein uS10 (102 aa).

The protein belongs to the universal ribosomal protein uS10 family. As to quaternary structure, part of the 30S ribosomal subunit.

Involved in the binding of tRNA to the ribosomes. The polypeptide is Small ribosomal subunit protein uS10 (Clostridium perfringens (strain ATCC 13124 / DSM 756 / JCM 1290 / NCIMB 6125 / NCTC 8237 / Type A)).